The sequence spans 145 residues: Photosystem I reaction center subunit XI (145 aa).

3 consecutive transmembrane segments (helical) span residues 48 to 68 (LEIGMAHGYFLIGPFYILGPL), 75 to 95 (LLVGLFSAFGLILILTLGLTI), and 125 to 145 (IGAFGGASVAYVLLDNISFFA).

The protein belongs to the PsaL family.

It localises to the plastid. It is found in the chloroplast thylakoid membrane. This chain is Photosystem I reaction center subunit XI, found in Emiliania huxleyi (Coccolithophore).